Here is a 540-residue protein sequence, read N- to C-terminus: Terminase large subunit (540 aa).

Residues Asp352, Asp424, and Asp523 each coordinate Mn(2+).

Belongs to the skunavirus terminase large subunit family. Interacts with the terminase small subunit; the active complex is probably heterooligomeric. Requires Mn(2+) as cofactor. Mg(2+) serves as cofactor.

Its function is as follows. The terminase large subunit acts as an ATP driven molecular motor necessary for viral DNA translocation into empty capsids and as an endonuclease that cuts the viral genome to initiate and to end a packaging reaction. The terminase lies at a unique vertex of the procapsid and is composed of two subunits, a small terminase subunit involved in viral DNA recognition (packaging sequence), and a large terminase subunit possessing endonucleolytic and ATPase activities. Both terminase subunits heterooligomerize and are docked on the portal protein to form the packaging machine. The terminase large subunit exhibits endonuclease activity and cleaves the viral genome concatemer. This chain is Terminase large subunit, found in Lactococcus lactis (Lactococcus lactis bacteriophage SK1).